Reading from the N-terminus, the 596-residue chain is Pumilio homolog 12 (596 aa).

Residues 254–596 (LNEDLTMSLN…KVLSALSSKK (343 aa)) enclose the PUM-HD domain. Pumilio repeat units follow at residues 277–312 (EARG…MIFN), 313–348 (EIID…QIVH), 349–388 (SITR…IIIS), 389–424 (ALKH…FLFE), 425–460 (AAIT…HLVS), 461–496 (EIAS…EILE), 497–532 (QLEG…RIIR), and 533–570 (ELIN…LLVD).

Its subcellular location is the cytoplasm. It localises to the nucleus. In terms of biological role, sequence-specific RNA-binding protein that regulates translation and mRNA stability by binding the 3'-UTR of target mRNAs. The chain is Pumilio homolog 12 (APUM12) from Arabidopsis thaliana (Mouse-ear cress).